The following is a 780-amino-acid chain: ATP-dependent 6-phosphofructokinase, liver type (780 aa).

At Ala-2 the chain carries N-acetylalanine. Residues 2–390 (ATVDLEKLRM…NWKIYKLLAH (389 aa)) are N-terminal catalytic PFK domain 1. Residues Gly-25, 88–89 (RC), and 118–121 (GDGS) each bind ATP. Asp-119 contributes to the Mg(2+) binding site. Residues 164 to 166 (SID), Arg-201, 208 to 210 (MGR), Glu-264, Arg-292, and 298 to 301 (HVQR) each bind substrate. Asp-166 serves as the catalytic Proton acceptor. A Phosphoserine modification is found at Ser-377. The interval 391–400 (QKVSKEKSNF) is interdomain linker. The interval 401–780 (SLAILNVGAP…RRTLSIDKGF (380 aa)) is C-terminal regulatory PFK domain 2. Beta-D-fructose 2,6-bisphosphate-binding positions include Arg-470, 527–531 (TISNN), Arg-565, 572–574 (MGG), and Glu-628. Residue Ser-529 is glycosylated (O-linked (GlcNAc) serine). Tyr-640 bears the Phosphotyrosine mark. Beta-D-fructose 2,6-bisphosphate is bound by residues Arg-654, 660–663 (HLQQ), and Arg-734. Phosphoserine is present on Ser-775.

The protein belongs to the phosphofructokinase type A (PFKA) family. ATP-dependent PFK group I subfamily. Eukaryotic two domain clade 'E' sub-subfamily. Homo- and heterotetramers. Phosphofructokinase (PFK) enzyme functions as a tetramer composed of different combinations of 3 types of subunits, called PFKM (M), PFKL (L) and PFKP (P). The composition of the PFK tetramer differs according to the tissue type it is present in. The kinetic and regulatory properties of the tetrameric enzyme are dependent on the subunit composition, hence can vary across tissues. Requires Mg(2+) as cofactor. In terms of processing, glcNAcylation at Ser-529 by OGT decreases enzyme activity, leading to redirect glucose flux through the oxidative pentose phosphate pathway. Glycosylation is stimulated by both hypoxia and glucose deprivation.

The protein localises to the cytoplasm. The catalysed reaction is beta-D-fructose 6-phosphate + ATP = beta-D-fructose 1,6-bisphosphate + ADP + H(+). Its pathway is carbohydrate degradation; glycolysis; D-glyceraldehyde 3-phosphate and glycerone phosphate from D-glucose: step 3/4. Its activity is regulated as follows. Allosterically activated by ADP, AMP, or fructose 2,6-bisphosphate, and allosterically inhibited by ATP or citrate. GlcNAcylation by OGT overcomes allosteric regulation. Catalyzes the phosphorylation of D-fructose 6-phosphate to fructose 1,6-bisphosphate by ATP, the first committing step of glycolysis. Negatively regulates the phagocyte oxidative burst in response to bacterial infection by controlling cellular NADPH biosynthesis and NADPH oxidase-derived reactive oxygen species. Upon macrophage activation, drives the metabolic switch toward glycolysis, thus preventing glucose turnover that produces NADPH via pentose phosphate pathway. The sequence is that of ATP-dependent 6-phosphofructokinase, liver type from Mus musculus (Mouse).